The primary structure comprises 156 residues: ATP synthase subunit b (156 aa).

The chain crosses the membrane as a helical span at residues 5 to 25; the sequence is LTLIGQAIAFAVFVWFCMKFV.

This sequence belongs to the ATPase B chain family. As to quaternary structure, F-type ATPases have 2 components, F(1) - the catalytic core - and F(0) - the membrane proton channel. F(1) has five subunits: alpha(3), beta(3), gamma(1), delta(1), epsilon(1). F(0) has three main subunits: a(1), b(2) and c(10-14). The alpha and beta chains form an alternating ring which encloses part of the gamma chain. F(1) is attached to F(0) by a central stalk formed by the gamma and epsilon chains, while a peripheral stalk is formed by the delta and b chains.

Its subcellular location is the cell inner membrane. F(1)F(0) ATP synthase produces ATP from ADP in the presence of a proton or sodium gradient. F-type ATPases consist of two structural domains, F(1) containing the extramembraneous catalytic core and F(0) containing the membrane proton channel, linked together by a central stalk and a peripheral stalk. During catalysis, ATP synthesis in the catalytic domain of F(1) is coupled via a rotary mechanism of the central stalk subunits to proton translocation. Functionally, component of the F(0) channel, it forms part of the peripheral stalk, linking F(1) to F(0). The chain is ATP synthase subunit b from Chromohalobacter salexigens (strain ATCC BAA-138 / DSM 3043 / CIP 106854 / NCIMB 13768 / 1H11).